Reading from the N-terminus, the 1331-residue chain is ABC multidrug transporter MDR2 (1331 aa).

Basic and acidic residues-rich tracts occupy residues 1–20 (MVEV…KQEN) and 31–41 (SDKEKVAKKGN). The tract at residues 1 to 51 (MVEVSEKPNTQDDGVSKQENRNPASSSSSTSDKEKVAKKGNSDATKSSTPE) is disordered. The next 4 membrane-spanning stretches (helical) occupy residues 93-113 (MIFL…LPLF), 147-167 (YFVY…VGFI), 219-239 (KVGL…IGYV), and 242-262 (WKLA…MGGI). The region spanning 97 to 387 (AIVSLASIAA…VAPNTQAFAS (291 aa)) is the ABC transmembrane type-1 1 domain. Residue N293 is glycosylated (N-linked (GlcNAc...) asparagine). The next 2 membrane-spanning stretches (helical) occupy residues 325–345 (LGIM…LGFW) and 358–378 (LSAI…IGNV). An ABC transporter 1 domain is found at 422-667 (IEFRGIKHIY…KGTYLQLVEA (246 aa)). Residue 457–464 (GPSGSGKS) coordinates ATP. The N-linked (GlcNAc...) asparagine glycan is linked to N529. Transmembrane regions (helical) follow at residues 762 to 782 (LCGF…SVFF) and 810 to 830 (FLML…IFAI). An ABC transmembrane type-1 2 domain is found at 764 to 1051 (GFFFAVLSGA…VFSFSPDMGK (288 aa)). An N-linked (GlcNAc...) asparagine glycan is attached at N860. The next 4 helical transmembrane spans lie at 884-904 (LGTI…ALAF), 910-930 (LVCI…FWIL), 995-1015 (ASQS…GGLL), and 1025-1045 (FFLC…VFSF). The ABC transporter 2 domain occupies 1086 to 1324 (IEFRDVHFRY…KGRYYELVHM (239 aa)). Residue N1108 is glycosylated (N-linked (GlcNAc...) asparagine). An ATP-binding site is contributed by 1121 to 1128 (GPSGCGKS).

The protein belongs to the ABC transporter superfamily. ABCB family. Multidrug resistance exporter (TC 3.A.1.201) subfamily.

Its subcellular location is the cell membrane. It carries out the reaction itraconazole(in) + ATP + H2O = itraconazole(out) + ADP + phosphate + H(+). Pleiotropic ABC efflux transporter that may be involved in the modulation susceptibility to a wide range of unrelated cytotoxic compounds, including terbinafine, 4-nitroquinoline N-oxide, and ethidium bromide. May play a role in pathogenicity. The sequence is that of ABC multidrug transporter MDR2 from Trichophyton interdigitale (strain MR816).